The sequence spans 369 residues: Transaldolase (369 aa).

The active-site Schiff-base intermediate with substrate is the Lys-140.

The protein belongs to the transaldolase family. Type 2 subfamily.

Its subcellular location is the cytoplasm. The catalysed reaction is D-sedoheptulose 7-phosphate + D-glyceraldehyde 3-phosphate = D-erythrose 4-phosphate + beta-D-fructose 6-phosphate. The protein operates within carbohydrate degradation; pentose phosphate pathway; D-glyceraldehyde 3-phosphate and beta-D-fructose 6-phosphate from D-ribose 5-phosphate and D-xylulose 5-phosphate (non-oxidative stage): step 2/3. Its function is as follows. Transaldolase is important for the balance of metabolites in the pentose-phosphate pathway. The polypeptide is Transaldolase (Parafrankia sp. (strain EAN1pec)).